The chain runs to 1342 residues: DNA-directed RNA polymerase subunit beta (1342 aa).

An N6-acetyllysine mark is found at K1022 and K1200.

The protein belongs to the RNA polymerase beta chain family. In terms of assembly, the RNAP catalytic core consists of 2 alpha, 1 beta, 1 beta' and 1 omega subunit. When a sigma factor is associated with the core the holoenzyme is formed, which can initiate transcription.

It carries out the reaction RNA(n) + a ribonucleoside 5'-triphosphate = RNA(n+1) + diphosphate. Its function is as follows. DNA-dependent RNA polymerase catalyzes the transcription of DNA into RNA using the four ribonucleoside triphosphates as substrates. The protein is DNA-directed RNA polymerase subunit beta of Escherichia fergusonii (strain ATCC 35469 / DSM 13698 / CCUG 18766 / IAM 14443 / JCM 21226 / LMG 7866 / NBRC 102419 / NCTC 12128 / CDC 0568-73).